The primary structure comprises 293 residues: MRVLVGGGTGFIGTALTQLLNARGHEVTLVSRKPGPGRITWDELAASGLPSCDAAVNLAGENILNPLRRWNETFQKEVIGSRLETTQLLAKAITKAPQPPKAWVLVTGVAYYQPSLTAEYDEDSPGGDFDFFSNLVTKWEAAARLPGDSTRQVVVRSGVVLGRGGGAMGHMLLPFRLGLGGPIGSGHQFFPWIHIGDLAGILTHALEANHVHGVLNGVAPSSATNAEFAQTLGAALGRRAFIPLPSAVVQAVFGRQRAIMLLEGQKVIPQRTLATGYQYSFPELGAALKEIVA.

NADP(+) is bound by residues 31-32 (SR), 58-59 (LA), glutamate 77, arginine 82, and valine 160.

The protein belongs to the NAD(P)-dependent epimerase/dehydratase family. SDR39U1 subfamily. Expressed in adrenal gland.

Its function is as follows. Putative NADP-dependent oxidoreductase. This chain is Epimerase family protein SDR39U1 (SDR39U1), found in Homo sapiens (Human).